The chain runs to 82 residues: Putative membrane protein insertion efficiency factor (82 aa).

Belongs to the UPF0161 family.

The protein localises to the cell inner membrane. In terms of biological role, could be involved in insertion of integral membrane proteins into the membrane. In Rickettsia typhi (strain ATCC VR-144 / Wilmington), this protein is Putative membrane protein insertion efficiency factor.